Here is a 574-residue protein sequence, read N- to C-terminus: Phosphoenolpyruvate-protein phosphotransferase (574 aa).

The active-site Tele-phosphohistidine intermediate is the histidine 190. Positions 297 and 333 each coordinate phosphoenolpyruvate. Residues glutamate 432 and aspartate 456 each coordinate Mg(2+). Phosphoenolpyruvate-binding positions include 455–456 (ND) and arginine 466. Cysteine 503 serves as the catalytic Proton donor.

It belongs to the PEP-utilizing enzyme family. Homodimer. Mg(2+) is required as a cofactor.

It localises to the cytoplasm. It carries out the reaction L-histidyl-[protein] + phosphoenolpyruvate = N(pros)-phospho-L-histidyl-[protein] + pyruvate. In terms of biological role, general (non sugar-specific) component of the phosphoenolpyruvate-dependent sugar phosphotransferase system (sugar PTS). This major carbohydrate active-transport system catalyzes the phosphorylation of incoming sugar substrates concomitantly with their translocation across the cell membrane. Enzyme I transfers the phosphoryl group from phosphoenolpyruvate (PEP) to the phosphoryl carrier protein (HPr). This chain is Phosphoenolpyruvate-protein phosphotransferase (ptsI), found in Latilactobacillus sakei (Lactobacillus sakei).